Reading from the N-terminus, the 458-residue chain is tRNA-2-methylthio-N(6)-dimethylallyladenosine synthase (458 aa).

Residues 15–134 (KKVFIKTYGC…LPELLQQAQQ (120 aa)) enclose the MTTase N-terminal domain. Positions 24, 60, 97, 175, 179, and 182 each coordinate [4Fe-4S] cluster. One can recognise a Radical SAM core domain in the interval 161–393 (QKRGVSAFLT…QALLLDQQHR (233 aa)). A TRAM domain is found at 396 to 457 (RSKIGQTTDV…SNSFVGEKAN (62 aa)).

The protein belongs to the methylthiotransferase family. MiaB subfamily. As to quaternary structure, monomer. [4Fe-4S] cluster is required as a cofactor.

Its subcellular location is the cytoplasm. The catalysed reaction is N(6)-dimethylallyladenosine(37) in tRNA + (sulfur carrier)-SH + AH2 + 2 S-adenosyl-L-methionine = 2-methylsulfanyl-N(6)-dimethylallyladenosine(37) in tRNA + (sulfur carrier)-H + 5'-deoxyadenosine + L-methionine + A + S-adenosyl-L-homocysteine + 2 H(+). Catalyzes the methylthiolation of N6-(dimethylallyl)adenosine (i(6)A), leading to the formation of 2-methylthio-N6-(dimethylallyl)adenosine (ms(2)i(6)A) at position 37 in tRNAs that read codons beginning with uridine. The protein is tRNA-2-methylthio-N(6)-dimethylallyladenosine synthase of Bartonella bacilliformis (strain ATCC 35685 / KC583 / Herrer 020/F12,63).